The following is a 264-amino-acid chain: Type III pantothenate kinase 2 (264 aa).

6-13 (DVGNTFTV) is a binding site for ATP. Substrate-binding positions include Y100 and 107-110 (GADR). D109 serves as the catalytic Proton acceptor. D129 contacts K(+). T132 serves as a coordination point for ATP. T184 lines the substrate pocket.

This sequence belongs to the type III pantothenate kinase family. As to quaternary structure, homodimer. It depends on NH4(+) as a cofactor. K(+) is required as a cofactor.

Its subcellular location is the cytoplasm. It catalyses the reaction (R)-pantothenate + ATP = (R)-4'-phosphopantothenate + ADP + H(+). The protein operates within cofactor biosynthesis; coenzyme A biosynthesis; CoA from (R)-pantothenate: step 1/5. In terms of biological role, catalyzes the phosphorylation of pantothenate (Pan), the first step in CoA biosynthesis. The chain is Type III pantothenate kinase 2 from Symbiobacterium thermophilum (strain DSM 24528 / JCM 14929 / IAM 14863 / T).